The chain runs to 223 residues: NLP effector protein 3 (223 aa).

The Conserved undecapeptide motif motif lies at 90 to 100 (AIMYVWYFPKD). Residues 107-113 (GHRHDWE) carry the Conserved heptapeptide motif motif.

It belongs to the Necrosis inducing protein (NPP1) family.

The protein resides in the secreted. The protein localises to the host cytoplasm. Probable secreted effector that may act as a pathogen-associated molecular pattern (PAMP) recognized by the plant immune system. Seems not to induce necrosis, neither in several susceptible or resistant Vitis species nor in the dicot model plant Nicotiana benthamiana. The sequence is that of NLP effector protein 3 from Plasmopara viticola (Downy mildew of grapevine).